The primary structure comprises 630 residues: ATP-dependent zinc metalloprotease FtsH (630 aa).

The Cytoplasmic portion of the chain corresponds to 1–7 (MNNFMKN). Residues 8–28 (IGFYLVLIALSILVAQFFVDT) form a helical membrane-spanning segment. Over 29 to 111 (DVNTIVDTDV…KTEPEPTAPW (83 aa)) the chain is Periplasmic. The chain crosses the membrane as a helical span at residues 112-132 (WTGMLAYILPIILLIGAWFFI). Over 133–630 (MQRMQGGGSQ…ENREHENNDK (498 aa)) the chain is Cytoplasmic. Residue 203 to 210 (GPPGTGKT) coordinates ATP. His-425 contacts Zn(2+). Glu-426 is an active-site residue. The Zn(2+) site is built by His-429 and Asp-501. The tract at residues 601–630 (KLIKGEPLDDDSIDNSTDENENREHENNDK) is disordered. Residues 608–619 (LDDDSIDNSTDE) show a composition bias toward acidic residues. Residues 620–630 (NENREHENNDK) show a composition bias toward basic and acidic residues.

It in the central section; belongs to the AAA ATPase family. In the C-terminal section; belongs to the peptidase M41 family. In terms of assembly, homohexamer. The cofactor is Zn(2+).

It is found in the cell inner membrane. In terms of biological role, acts as a processive, ATP-dependent zinc metallopeptidase for both cytoplasmic and membrane proteins. Plays a role in the quality control of integral membrane proteins. In Halothermothrix orenii (strain H 168 / OCM 544 / DSM 9562), this protein is ATP-dependent zinc metalloprotease FtsH.